The following is a 597-amino-acid chain: MAEETRQSKLAAAKRKLKEYWQRNSPGVPAGAKRNRKTNGSIHETATSGGCHSPGDSSSTSSSLHAPQSPCQELAVVPDSRSVKVSQLKNTIKSLKQQKKQVEHQLEEEKKANNEKQKAERGLEVQIQRLNIQKGKLNTDLYHTKRSLRYFEEESKDLAVRLQHSLQRKGELERALSAVTATQKKKAERFSSRSKARMEWKLEQSMREQALLKAQLTQLKESLKEVQLERDEYAEHLKGERARWQQRMRKMSQEVCSLKKEKKHDKYRVETLERSLSKLKHQMAEPLPPEPPAVPSEVELQHLRKELERVAGALQAQVEYNQRISLLNEGQKERLREQEERLQEQQERLREQEERLQQLAEPQNSFKELNNENKSVLQLEQQVKELQEKLGKRLAHPVASAQKEPEAAVPAPGPGGESSGFMDHLEEKADLSELVEKEELGFFQYYRERCHQKVYHPITKPGGSAKDAAPGGGHHQAGPGQGGDEGEAAGAAGDGVAAGGDYKGHSKFLVTAQNPAHEPSPGAPAPQELGAAHKHGDLCEVSLTDSVEPVQGETREGSPHDKPTAQPIVQDHQEHPGLGSNCCVPFFCWAWPPRRRR.

Disordered stretches follow at residues 1-80 (MAEE…VPDS) and 96-120 (KQQK…QKAE). A compositionally biased stretch (polar residues) spans 38–50 (TNGSIHETATSGG). Positions 53–70 (SPGDSSSTSSSLHAPQSP) are enriched in low complexity. Coiled-coil stretches lie at residues 81-141 (RSVK…NTDL), 199-255 (EWKL…SQEV), and 296-394 (SEVE…GKRL). Basic and acidic residues predominate over residues 100 to 120 (KQVEHQLEEEKKANNEKQKAE). Disordered stretches follow at residues 390-422 (LGKR…SGFM), 457-498 (PITK…GVAA), and 549-576 (PVQG…QEHP). Residues 470–483 (PGGGHHQAGPGQGG) show a composition bias toward gly residues. A compositionally biased stretch (basic and acidic residues) spans 553-563 (ETREGSPHDKP).

It belongs to the GOLGA8 family.

The protein is Golgin subfamily A member 8C (GOLGA8CP) of Homo sapiens (Human).